The chain runs to 323 residues: tRNA dimethylallyltransferase (323 aa).

12–19 (GPTAAGKT) contributes to the ATP binding site. Position 14–19 (14–19 (TAAGKT)) interacts with substrate. Interaction with substrate tRNA stretches follow at residues 37-40 (DSAL) and 161-165 (QRLIR).

It belongs to the IPP transferase family. As to quaternary structure, monomer. Mg(2+) is required as a cofactor.

The enzyme catalyses adenosine(37) in tRNA + dimethylallyl diphosphate = N(6)-dimethylallyladenosine(37) in tRNA + diphosphate. Catalyzes the transfer of a dimethylallyl group onto the adenine at position 37 in tRNAs that read codons beginning with uridine, leading to the formation of N6-(dimethylallyl)adenosine (i(6)A). In Pseudomonas putida (strain ATCC 47054 / DSM 6125 / CFBP 8728 / NCIMB 11950 / KT2440), this protein is tRNA dimethylallyltransferase.